Here is a 356-residue protein sequence, read N- to C-terminus: Histidinol-phosphate aminotransferase (356 aa).

Residue Lys-214 is modified to N6-(pyridoxal phosphate)lysine.

It belongs to the class-II pyridoxal-phosphate-dependent aminotransferase family. Histidinol-phosphate aminotransferase subfamily. Homodimer. Requires pyridoxal 5'-phosphate as cofactor.

The catalysed reaction is L-histidinol phosphate + 2-oxoglutarate = 3-(imidazol-4-yl)-2-oxopropyl phosphate + L-glutamate. It participates in amino-acid biosynthesis; L-histidine biosynthesis; L-histidine from 5-phospho-alpha-D-ribose 1-diphosphate: step 7/9. The chain is Histidinol-phosphate aminotransferase from Escherichia coli O127:H6 (strain E2348/69 / EPEC).